The chain runs to 643 residues: MVDAGGVENITQLPQELPQMMAAAADGLGSIAIDTTQLNMSVTDPTAWATAMNNLGMVPVGLPGQQLVSDSICVPGFDPSLNMMTGITPINPMIPGLGLVPPPPPTEVAVVKEIIHCKSCTLFPQNPNLPPPSTRERPPGCKTVFVGGLPENATEEIIQEVFEQCGDITAIRKSKKNFCHIRFAEEFMVDKAIYLSGYRMRLGSSTDKKDSGRLHVDFAQARDDFYEWECKQRMRAREERHRRKLEEDRLRPPSPPAIMHYSEHEAALLAEKLKDDSKFSEAITVLLSWIERGEVNRRSANQFYSMVQSANSHVRRLMNEKATHEQEMEEAKENFKNALTGILTQFEQIVAVFNASTRQKAWDHFSKAQRKNIDIWRKHSEELRNAQSEQLMGIRREEEMEMSDDENCDSPTKKMRVDESALAAQAYALKEENDSLRWQLDAYRNEVELLKQEKEQLFRTEENLTKDQQLQFLQQTMQGMQQQLLTIQEELNNKKSELEQAKEEQSHTQALLKVLQEQLKGTKELVETNGHSHEDSNEINVLTVALVNQDRENNIEKRSQGLKSEKEALLIGIISTFLHVHPFGANIEYLWSYMQQLDSKISANEIEMLLMRLPRMFKQEFTGVGATLEKRWKLCAFEGIKTT.

The RRM domain occupies K142–A221. Coiled coils occupy residues V307–I342 and Q425–L570.

The protein belongs to the ENOX family. It depends on Cu cation as a cofactor. Expressed in lymphocyte cells, breast and breast cancer (at protein level). Found in the sera of cancer patients with a wide variety of cancers including breast, prostate, lung and ovarian cancers, leukemias, and lymphomas. Found also in the serum of healthy volunteers or patients with disorders other than cancer. Probably shed into serum by cancer cells.

The protein resides in the cell membrane. It localises to the secreted. It is found in the extracellular space. With respect to regulation, not inhibited by the antitumor sulfonylurea LY181984, the vabilloid capsaicin, and retinoids. In terms of biological role, probably acts as a terminal oxidase of plasma electron transport from cytosolic NAD(P)H via hydroquinones to acceptors at the cell surface. Hydroquinone oxidase activity alternates with a protein disulfide-thiol interchange/oxidoreductase activity which may control physical membrane displacements associated with vesicle budding or cell enlargement. The activities oscillate with a period length of 24 minutes and play a role in control of the ultradian cellular biological clock. The polypeptide is Ecto-NOX disulfide-thiol exchanger 1 (ENOX1) (Homo sapiens (Human)).